Reading from the N-terminus, the 397-residue chain is Elongation factor Tu (397 aa).

Residues 10 to 206 enclose the tr-type G domain; it reads KPHVNIGTIG…EVDAYIPTPE (197 aa). The G1 stretch occupies residues 19–26; it reads GHVDHGKT. 19–26 serves as a coordination point for GTP; it reads GHVDHGKT. Mg(2+) is bound at residue Thr26. A G2 region spans residues 60–64; the sequence is GITIN. Residues 81 to 84 form a G3 region; the sequence is DCPG. GTP-binding positions include 81 to 85 and 136 to 139; these read DCPGH and NKAD. Residues 136 to 139 are G4; it reads NKAD. The segment at 174–176 is G5; it reads SAL.

The protein belongs to the TRAFAC class translation factor GTPase superfamily. Classic translation factor GTPase family. EF-Tu/EF-1A subfamily. Monomer.

It localises to the cytoplasm. It catalyses the reaction GTP + H2O = GDP + phosphate + H(+). In terms of biological role, GTP hydrolase that promotes the GTP-dependent binding of aminoacyl-tRNA to the A-site of ribosomes during protein biosynthesis. The polypeptide is Elongation factor Tu (Clostridium acetobutylicum (strain ATCC 824 / DSM 792 / JCM 1419 / IAM 19013 / LMG 5710 / NBRC 13948 / NRRL B-527 / VKM B-1787 / 2291 / W)).